A 190-amino-acid chain; its full sequence is Dual-action ribosomal maturation protein DarP (190 aa).

The interval 1–31 (MIHADHDDNLPDDEEGLPLPPSKSQRKRDMH) is disordered.

Belongs to the DarP family.

It is found in the cytoplasm. Its function is as follows. Member of a network of 50S ribosomal subunit biogenesis factors which assembles along the 30S-50S interface, preventing incorrect 23S rRNA structures from forming. Promotes peptidyl transferase center (PTC) maturation. The protein is Dual-action ribosomal maturation protein DarP of Aromatoleum aromaticum (strain DSM 19018 / LMG 30748 / EbN1) (Azoarcus sp. (strain EbN1)).